The primary structure comprises 505 residues: Lysine--tRNA ligase (505 aa).

Positions 415 and 422 each coordinate Mg(2+).

This sequence belongs to the class-II aminoacyl-tRNA synthetase family. As to quaternary structure, homodimer. Mg(2+) serves as cofactor.

It is found in the cytoplasm. The catalysed reaction is tRNA(Lys) + L-lysine + ATP = L-lysyl-tRNA(Lys) + AMP + diphosphate. The protein is Lysine--tRNA ligase of Yersinia enterocolitica serotype O:8 / biotype 1B (strain NCTC 13174 / 8081).